The primary structure comprises 409 residues: Methylthioribose-1-phosphate isomerase (409 aa).

The active-site Proton donor is the Asp-277.

Belongs to the eIF-2B alpha/beta/delta subunits family. MtnA subfamily.

Its subcellular location is the cytoplasm. The protein resides in the nucleus. It catalyses the reaction 5-(methylsulfanyl)-alpha-D-ribose 1-phosphate = 5-(methylsulfanyl)-D-ribulose 1-phosphate. It functions in the pathway amino-acid biosynthesis; L-methionine biosynthesis via salvage pathway; L-methionine from S-methyl-5-thio-alpha-D-ribose 1-phosphate: step 1/6. Functionally, catalyzes the interconversion of methylthioribose-1-phosphate (MTR-1-P) into methylthioribulose-1-phosphate (MTRu-1-P). The sequence is that of Methylthioribose-1-phosphate isomerase from Scheffersomyces stipitis (strain ATCC 58785 / CBS 6054 / NBRC 10063 / NRRL Y-11545) (Yeast).